The primary structure comprises 291 residues: Urease accessory protein UreD (291 aa).

This sequence belongs to the UreD family. As to quaternary structure, ureD, UreF and UreG form a complex that acts as a GTP-hydrolysis-dependent molecular chaperone, activating the urease apoprotein by helping to assemble the nickel containing metallocenter of UreC. The UreE protein probably delivers the nickel.

It is found in the cytoplasm. Required for maturation of urease via the functional incorporation of the urease nickel metallocenter. The polypeptide is Urease accessory protein UreD (Acinetobacter baumannii (strain ACICU)).